The chain runs to 335 residues: GIPYWTYNNGDEPLVAISLLDTSNIANQLDSTPRVFYLGGNPEVEFPETQEEQQERHQQKHSLPVGRRGGQHQQEEESEEQKDGNSVLSGFSSEFLAQTFNTEEDTAKRLRSPRDKRNQIVRVEGGLRIINPEGQQEEEEEEEEEKQRSEQGRNGLEETICSLKIRENIAQPARADLYNPRAGSISTANSLTLPILRYLRLSAEYVRLYRNGIYAPHWNINANSLLYVIRGEGRVRIVNSQGNAVFDNKVRKGQLVVVPQNFVVAEQAGEEEGLEYLVFKTNDRAAVSHVQQVFRATPADVLANAFGLRQRQVTELKLSGNRGPLVHPQSQSQSN.

Disordered stretches follow at residues 47-87 (PETQ…GNSV) and 102-155 (TEED…GRNG). Positions 105-118 (DTAKRLRSPRDKRN) are enriched in basic and acidic residues. The span at 135–144 (QQEEEEEEEE) shows a compositional bias: acidic residues. Positions 167 to 314 (ENIAQPARAD…AFGLRQRQVT (148 aa)) constitute a Cupin type-1 domain.

This sequence belongs to the 11S seed storage protein (globulins) family. Hexamer; each subunit is composed of an acidic and a basic chain derived from a single precursor and linked by a disulfide bond.

Its function is as follows. This protein found in the seeds of many leguminous and non-leguminous plants is the source of sulfur-containing amino acids in seed meals. This Vicia faba (Broad bean) protein is Legumin type B (LEB2).